The following is a 375-amino-acid chain: tRNA-specific 2-thiouridylase MnmA (375 aa).

ATP is bound by residues 16-23 (GMSGGVDS) and Met-42. The tract at residues 102 to 104 (NPD) is interaction with target base in tRNA. Cys-107 (nucleophile) is an active-site residue. The cysteines at positions 107 and 203 are disulfide-linked. An ATP-binding site is contributed by Gly-131. The interval 153–155 (KDQ) is interaction with tRNA. Cys-203 serves as the catalytic Cysteine persulfide intermediate. Residues 315–316 (RY) are interaction with tRNA.

The protein belongs to the MnmA/TRMU family.

It is found in the cytoplasm. It catalyses the reaction S-sulfanyl-L-cysteinyl-[protein] + uridine(34) in tRNA + AH2 + ATP = 2-thiouridine(34) in tRNA + L-cysteinyl-[protein] + A + AMP + diphosphate + H(+). Functionally, catalyzes the 2-thiolation of uridine at the wobble position (U34) of tRNA, leading to the formation of s(2)U34. This chain is tRNA-specific 2-thiouridylase MnmA, found in Pseudomonas paraeruginosa (strain DSM 24068 / PA7) (Pseudomonas aeruginosa (strain PA7)).